We begin with the raw amino-acid sequence, 200 residues long: Holliday junction branch migration complex subunit RuvA (200 aa).

A domain I region spans residues 1 to 64 (MLSYLSGTLI…EDALQLYGFI (64 aa)). Positions 65-143 (TTEDREVFKL…KLDLKIDIKE (79 aa)) are domain II. A flexible linker region spans residues 144–148 (TAFRS). Positions 149–200 (DKQQVRNDAYSALISLGFTKSIAEKAMRAAIAEVPDGSVDDLIRVALRHVQS) are domain III.

The protein belongs to the RuvA family. As to quaternary structure, homotetramer. Forms an RuvA(8)-RuvB(12)-Holliday junction (HJ) complex. HJ DNA is sandwiched between 2 RuvA tetramers; dsDNA enters through RuvA and exits via RuvB. An RuvB hexamer assembles on each DNA strand where it exits the tetramer. Each RuvB hexamer is contacted by two RuvA subunits (via domain III) on 2 adjacent RuvB subunits; this complex drives branch migration. In the full resolvosome a probable DNA-RuvA(4)-RuvB(12)-RuvC(2) complex forms which resolves the HJ.

The protein resides in the cytoplasm. Functionally, the RuvA-RuvB-RuvC complex processes Holliday junction (HJ) DNA during genetic recombination and DNA repair, while the RuvA-RuvB complex plays an important role in the rescue of blocked DNA replication forks via replication fork reversal (RFR). RuvA specifically binds to HJ cruciform DNA, conferring on it an open structure. The RuvB hexamer acts as an ATP-dependent pump, pulling dsDNA into and through the RuvAB complex. HJ branch migration allows RuvC to scan DNA until it finds its consensus sequence, where it cleaves and resolves the cruciform DNA. The polypeptide is Holliday junction branch migration complex subunit RuvA (Chloroherpeton thalassium (strain ATCC 35110 / GB-78)).